Here is a 548-residue protein sequence, read N- to C-terminus: Fumarate hydratase class I, anaerobic (548 aa).

[4Fe-4S] cluster is bound at residue cysteine 105. At lysine 192 the chain carries N6-acetyllysine. Residues cysteine 224 and cysteine 318 each coordinate [4Fe-4S] cluster.

This sequence belongs to the class-I fumarase family. Homodimer. The cofactor is [4Fe-4S] cluster.

It catalyses the reaction (S)-malate = fumarate + H2O. The catalysed reaction is (S,S)-tartrate = oxaloacetate + H2O. In terms of biological role, catalyzes the reversible hydration of fumarate to (S)-malate. Functions in the generation of fumarate for use as an anaerobic electron acceptor. To a lesser extent, also displays D-tartrate dehydratase activity, but is not able to convert (R)-malate, L-tartrate or meso-tartrate. Is required for anaerobic growth on D-tartrate. The polypeptide is Fumarate hydratase class I, anaerobic (Escherichia coli (strain K12)).